A 306-amino-acid chain; its full sequence is UDP-3-O-acyl-N-acetylglucosamine deacetylase (306 aa).

Zn(2+)-binding residues include H79, H238, and D242. The active-site Proton donor is the H265.

Belongs to the LpxC family. Zn(2+) is required as a cofactor.

It catalyses the reaction a UDP-3-O-[(3R)-3-hydroxyacyl]-N-acetyl-alpha-D-glucosamine + H2O = a UDP-3-O-[(3R)-3-hydroxyacyl]-alpha-D-glucosamine + acetate. It functions in the pathway glycolipid biosynthesis; lipid IV(A) biosynthesis; lipid IV(A) from (3R)-3-hydroxytetradecanoyl-[acyl-carrier-protein] and UDP-N-acetyl-alpha-D-glucosamine: step 2/6. Catalyzes the hydrolysis of UDP-3-O-myristoyl-N-acetylglucosamine to form UDP-3-O-myristoylglucosamine and acetate, the committed step in lipid A biosynthesis. This chain is UDP-3-O-acyl-N-acetylglucosamine deacetylase, found in Shewanella oneidensis (strain ATCC 700550 / JCM 31522 / CIP 106686 / LMG 19005 / NCIMB 14063 / MR-1).